Reading from the N-terminus, the 707-residue chain is Serine/threonine protein kinase UL97 (707 aa).

Residues 1–14 are compositionally biased toward low complexity; that stretch reads MSSALRSRARSASL. Disordered stretches follow at residues 1–33, 113–146, 176–198, and 231–264; these read MSSA…SRAR, DGEK…GDGY, FTGG…RPLR, and ESQD…EADS. The span at 113-127 shows a compositional bias: basic and acidic residues; sequence DGEKEDAASDKENLR. Over residues 178–188 the composition is skewed to low complexity; that stretch reads GGSDPSDSVSG. ATP-binding positions include 337–345 and Lys359; that span reads LGQGSFGEV. The active-site Proton acceptor is Asp456.

It belongs to the protein kinase superfamily. Tyr protein kinase family. HCMV ganciclovir subfamily. In terms of assembly, interacts with UL83. In terms of processing, autophosphorylates on serine and threonine residues.

The protein resides in the virion. The catalysed reaction is L-seryl-[protein] + ATP = O-phospho-L-seryl-[protein] + ADP + H(+). It catalyses the reaction L-threonyl-[protein] + ATP = O-phospho-L-threonyl-[protein] + ADP + H(+). Functionally, serine/threonine protein kinase that plays important roles in several processes including nuclear viral egress, viral replication or regulation of host cell cycle progression. Participates in the acquisition of tegument during virion morphogenesis in the nucleus. Phosphorylates the viral nuclear egress complex (NEC) subunits UL50 and UL53. Redistributes the host nuclear lamina by phosphorylating cellular Lamins-A/C. Plays a role in viral DNA synthesis by phosphorylating the DNA polymerase processivity factor UL44. Stimulates host cell cycle to support viral DNA synthesis by phosphorylating host retinoblastoma/RB1 protein. Additional substrates have been identified including host EF1D or H2B. Also phosphorylates host SAMHD1 and thereby counteracts its antiviral effect by reducing its dNTP hydrolase activity. The chain is Serine/threonine protein kinase UL97 (UL97) from Human cytomegalovirus (strain AD169) (HHV-5).